We begin with the raw amino-acid sequence, 775 residues long: 5-methyltetrahydropteroyltriglutamate--homocysteine methyltransferase (775 aa).

Residues 15–18 and lysine 118 each bind 5-methyltetrahydropteroyltri-L-glutamate; that span reads RELK. L-homocysteine-binding positions include 448-450 and glutamate 501; that span reads IGS. Residues 448 to 450 and glutamate 501 contribute to the L-methionine site; that span reads IGS. 5-methyltetrahydropteroyltri-L-glutamate is bound by residues 532–533 and tryptophan 578; that span reads RC. Aspartate 616 contributes to the L-homocysteine binding site. Aspartate 616 is an L-methionine binding site. Glutamate 622 serves as a coordination point for 5-methyltetrahydropteroyltri-L-glutamate. Residues histidine 658, cysteine 660, and glutamate 682 each contribute to the Zn(2+) site. Histidine 711 acts as the Proton donor in catalysis. Cysteine 743 is a Zn(2+) binding site.

The protein belongs to the vitamin-B12 independent methionine synthase family. Requires Zn(2+) as cofactor.

It carries out the reaction 5-methyltetrahydropteroyltri-L-glutamate + L-homocysteine = tetrahydropteroyltri-L-glutamate + L-methionine. It functions in the pathway amino-acid biosynthesis; L-methionine biosynthesis via de novo pathway; L-methionine from L-homocysteine (MetE route): step 1/1. Its function is as follows. Catalyzes the transfer of a methyl group from 5-methyltetrahydrofolate to homocysteine resulting in methionine formation. The protein is 5-methyltetrahydropteroyltriglutamate--homocysteine methyltransferase of Cytophaga hutchinsonii (strain ATCC 33406 / DSM 1761 / CIP 103989 / NBRC 15051 / NCIMB 9469 / D465).